The chain runs to 239 residues: Enolase-phosphatase E1 (239 aa).

The protein belongs to the HAD-like hydrolase superfamily. MasA/MtnC family. Monomer. The cofactor is Mg(2+).

It carries out the reaction 5-methylsulfanyl-2,3-dioxopentyl phosphate + H2O = 1,2-dihydroxy-5-(methylsulfanyl)pent-1-en-3-one + phosphate. It functions in the pathway amino-acid biosynthesis; L-methionine biosynthesis via salvage pathway; L-methionine from S-methyl-5-thio-alpha-D-ribose 1-phosphate: step 3/6. The protein operates within amino-acid biosynthesis; L-methionine biosynthesis via salvage pathway; L-methionine from S-methyl-5-thio-alpha-D-ribose 1-phosphate: step 4/6. Bifunctional enzyme that catalyzes the enolization of 2,3-diketo-5-methylthiopentyl-1-phosphate (DK-MTP-1-P) into the intermediate 2-hydroxy-3-keto-5-methylthiopentenyl-1-phosphate (HK-MTPenyl-1-P), which is then dephosphorylated to form the acireductone 1,2-dihydroxy-3-keto-5-methylthiopentene (DHK-MTPene). This chain is Enolase-phosphatase E1, found in Streptomyces avermitilis (strain ATCC 31267 / DSM 46492 / JCM 5070 / NBRC 14893 / NCIMB 12804 / NRRL 8165 / MA-4680).